The primary structure comprises 60 residues: MRAKEIREMTSEDLVVKCKELKEELFNLKFQLSLGQLTNTAKIREIRREIARINTILNER.

It belongs to the universal ribosomal protein uL29 family.

In Fusobacterium nucleatum subsp. nucleatum (strain ATCC 25586 / DSM 15643 / BCRC 10681 / CIP 101130 / JCM 8532 / KCTC 2640 / LMG 13131 / VPI 4355), this protein is Large ribosomal subunit protein uL29.